We begin with the raw amino-acid sequence, 548 residues long: (S)-beta-macrocarpene synthase (548 aa).

Aspartate 302 and aspartate 306 together coordinate Mg(2+). Residues aspartate 302, aspartate 306, arginine 443, and asparagine 446 each contribute to the substrate site. Residues 302-306 carry the DDXXD motif motif; the sequence is DDTLD. Residues asparagine 446, serine 450, and glutamate 454 each contribute to the Mg(2+) site.

The protein belongs to the terpene synthase family. Monomer. Requires Mg(2+) as cofactor. Mn(2+) serves as cofactor. In terms of tissue distribution, expressed in roots. Not detected in leaves, unless damaged by herbivory or infected by fungi.

The protein localises to the cytoplasm. The catalysed reaction is (S)-beta-bisabolene = (S)-beta-macrocarpene. It carries out the reaction (2E,6E)-farnesyl diphosphate = (S)-beta-bisabolene + diphosphate. The enzyme catalyses (2E)-geranyl diphosphate = (4S)-limonene + diphosphate. It catalyses the reaction (2E)-geranyl diphosphate = beta-myrcene + diphosphate. The catalysed reaction is (2E)-geranyl diphosphate = terpinolene + diphosphate. It carries out the reaction (2E)-geranyl diphosphate + H2O = (S)-linalool + diphosphate. The protein operates within secondary metabolite biosynthesis; terpenoid biosynthesis. Functionally, involved in the biosynthesis of the bicyclic sesquiterpene (S)-beta-macrocarpene. Can use both geranyl diphosphate and farnesyl diphosphate as substrate, but not geranylgeranyl diphosphate. Produces mainly (S)-beta-macrocarpene, but also smaller amounts of beta-bisabolene and (E)-beta-farnesene when used with farnesyl diphosphate as substrate. In the presence of geranyl diphosphate, produces the acyclic monoterpenes beta-myrcene and linalool along with minor amounts of the cyclic compounds limonene, alpha-thujene, sabinene and alpha-terpinolene. May be involved in plant defense. In Zea mays (Maize), this protein is (S)-beta-macrocarpene synthase.